A 311-amino-acid chain; its full sequence is Malate dehydrogenase (311 aa).

Residues 7 to 13 (GAAGGIG) and Asp-34 contribute to the NAD(+) site. Positions 81 and 87 each coordinate substrate. Residues Asn-94 and 117–119 (ITN) each bind NAD(+). Asn-119 and Arg-153 together coordinate substrate. Catalysis depends on His-177, which acts as the Proton acceptor. Met-227 contacts NAD(+).

Belongs to the LDH/MDH superfamily. MDH type 1 family. In terms of assembly, homodimer.

It catalyses the reaction (S)-malate + NAD(+) = oxaloacetate + NADH + H(+). Catalyzes the reversible oxidation of malate to oxaloacetate. The protein is Malate dehydrogenase of Aliivibrio fischeri (strain ATCC 700601 / ES114) (Vibrio fischeri).